A 121-amino-acid chain; its full sequence is Large ribosomal subunit protein bL19 (121 aa).

Belongs to the bacterial ribosomal protein bL19 family.

In terms of biological role, this protein is located at the 30S-50S ribosomal subunit interface and may play a role in the structure and function of the aminoacyl-tRNA binding site. This Borrelia garinii subsp. bavariensis (strain ATCC BAA-2496 / DSM 23469 / PBi) (Borreliella bavariensis) protein is Large ribosomal subunit protein bL19.